Reading from the N-terminus, the 214-residue chain is Superoxide dismutase [Mn] (214 aa).

Mn(2+) is bound by residues His-27, His-82, Asp-169, and His-173.

This sequence belongs to the iron/manganese superoxide dismutase family. As to quaternary structure, homodimer. Mn(2+) serves as cofactor.

The catalysed reaction is 2 superoxide + 2 H(+) = H2O2 + O2. Destroys superoxide anion radicals which are normally produced within the cells and which are toxic to biological systems. The chain is Superoxide dismutase [Mn] (sodA) from Pasteurella multocida (strain Pm70).